We begin with the raw amino-acid sequence, 189 residues long: Ribulose bisphosphate carboxylase small subunit, chloroplastic (189 aa).

Residues 1–66 constitute a chloroplast transit peptide; it reads MASSIMALSS…KTTSNGSRVR (66 aa).

Belongs to the RuBisCO small chain family. In terms of assembly, heterohexadecamer of 8 large and 8 small subunits.

Its subcellular location is the plastid. It localises to the chloroplast. Functionally, ruBisCO catalyzes two reactions: the carboxylation of D-ribulose 1,5-bisphosphate, the primary event in carbon dioxide fixation, as well as the oxidative fragmentation of the pentose substrate. Both reactions occur simultaneously and in competition at the same active site. Although the small subunit is not catalytic it is essential for maximal activity. This Larix laricina (Tamarack) protein is Ribulose bisphosphate carboxylase small subunit, chloroplastic.